Reading from the N-terminus, the 781-residue chain is Phenylalanine--tRNA ligase beta subunit (781 aa).

In terms of domain architecture, tRNA-binding spans 39-147 (APPFNDVVVA…DDAPVGEDLR (109 aa)). The 76-residue stretch at 398–473 (PRREPIELRL…RLFGYDRIPA (76 aa)) folds into the B5 domain. Aspartate 451, aspartate 457, glutamate 460, and glutamate 461 together coordinate Mg(2+). Residues 687 to 780 (SRFPQVRRDL…AARRCSATLR (94 aa)) form the FDX-ACB domain.

Belongs to the phenylalanyl-tRNA synthetase beta subunit family. Type 1 subfamily. As to quaternary structure, tetramer of two alpha and two beta subunits. It depends on Mg(2+) as a cofactor.

Its subcellular location is the cytoplasm. The catalysed reaction is tRNA(Phe) + L-phenylalanine + ATP = L-phenylalanyl-tRNA(Phe) + AMP + diphosphate + H(+). The sequence is that of Phenylalanine--tRNA ligase beta subunit from Thiobacillus denitrificans (strain ATCC 25259 / T1).